Here is a 64-residue protein sequence, read N- to C-terminus: Kappa-lycotoxin-Os1a (64 aa).

Intrachain disulfides connect Cys-10–Cys-26, Cys-17–Cys-56, Cys-19–Cys-42, and Cys-28–Cys-40.

Belongs to the neurotoxin 04 (omega-agtx) family. 01 (type I omega-agtx) subfamily. Expressed by the venom gland.

Its subcellular location is the secreted. Its function is as follows. Insecticidal to house crickets. It induces an excitatory slow-onset impact that leads to irreversible spastic paralysis. It also modifies human voltage-gated potassium channel Kv1.5/KCNA5. Most likely, it binds to the voltage-sensing domain of the channel, suggesting it does not block the pore but prevents its opening at physiological membrane potentials. The recombinant peptide binds to the channel in an irreversible manner and slows down the hKv1.5 current activation kinetics. It is not toxic to mice, when intracranially injected (at 0.5 ug/g mouse). This chain is Kappa-lycotoxin-Os1a, found in Oculicosa supermirabilis (Central Asian wolf-spider).